Here is a 272-residue protein sequence, read N- to C-terminus: Sugar-phosphatase AraL (272 aa).

It belongs to the HAD-like hydrolase superfamily. Requires Mg(2+) as cofactor.

The enzyme catalyses sugar phosphate + H2O = sugar + phosphate.. It carries out the reaction O-phospho-L-serine + H2O = L-serine + phosphate. The catalysed reaction is O-phospho-D-serine + H2O = D-serine + phosphate. Functionally, catalyzes the dephosphorylation of C5 and C6 carbon sugars in vitro. Catalyzes the dephosphorylation of 3'-AMP and phosphoserine in vitro. This is Sugar-phosphatase AraL (araL) from Bacillus subtilis (strain 168).